The chain runs to 937 residues: Protein translocase subunit SecA (937 aa).

Residues Gln86, 104–108 (GEGKT), and Asp493 each bind ATP. Positions 868–889 (LERPSQPTKLAYSAPSEDGDAE) are disordered. 4 residues coordinate Zn(2+): Cys911, Cys913, Cys922, and His923. A disordered region spans residues 915-937 (SGKKFKQCHGRPGGPTGLTARVS).

Belongs to the SecA family. As to quaternary structure, monomer and homodimer. Part of the essential Sec protein translocation apparatus which comprises SecA, SecYEG and auxiliary proteins SecDF. Other proteins may also be involved. The cofactor is Zn(2+).

It is found in the cell membrane. It localises to the cytoplasm. The catalysed reaction is ATP + H2O + cellular proteinSide 1 = ADP + phosphate + cellular proteinSide 2.. Part of the Sec protein translocase complex. Interacts with the SecYEG preprotein conducting channel. Has a central role in coupling the hydrolysis of ATP to the transfer of proteins into and across the cell membrane, serving as an ATP-driven molecular motor driving the stepwise translocation of polypeptide chains across the membrane. The sequence is that of Protein translocase subunit SecA from Nocardioides sp. (strain ATCC BAA-499 / JS614).